The following is a 284-amino-acid chain: Mediator of RNA polymerase II transcription subunit 4 (284 aa).

At serine 2 the chain carries N-acetylserine. Residues 205–284 (RIPGEEVEET…DLDLFDPDDF (80 aa)) are disordered. Over residues 225–238 (EEQKGQMAKKEGTP) the composition is skewed to basic and acidic residues. Phosphothreonine; by KIN28 is present on threonine 237. A Phosphoserine modification is found at serine 242. A compositionally biased stretch (basic and acidic residues) spans 248–265 (TAKEVGDEADNTKDKEKE). The span at 266–284 (ENNDDALDLDLDLFDPDDF) shows a compositional bias: acidic residues.

This sequence belongs to the Mediator complex subunit 4 family. In terms of assembly, component of the Mediator complex, which is composed of at least 21 subunits that form three structurally distinct submodules. The Mediator head module contains MED6, MED8, MED11, SRB4/MED17, SRB5/MED18, ROX3/MED19, SRB2/MED20 and SRB6/MED22, the middle module contains MED1, MED4, NUT1/MED5, MED7, CSE2/MED9, NUT2/MED10, SRB7/MED21 and SOH1/MED31, and the tail module contains MED2, PGD1/MED3, RGR1/MED14, GAL11/MED15 and SIN4/MED16. The head and the middle modules interact directly with RNA polymerase II, whereas the elongated tail module interacts with gene-specific regulatory proteins. MED4 interacts directly with MED1, MED7 and SRB7/MED21.

Its subcellular location is the nucleus. Functionally, component of the Mediator complex, a coactivator involved in the regulated transcription of nearly all RNA polymerase II-dependent genes. Mediator functions as a bridge to convey information from gene-specific regulatory proteins to the basal RNA polymerase II transcription machinery. The Mediator complex, having a compact conformation in its free form, is recruited to promoters by direct interactions with regulatory proteins and serves for the assembly of a functional preinitiation complex with RNA polymerase II and the general transcription factors. The Mediator complex unfolds to an extended conformation and partially surrounds RNA polymerase II, specifically interacting with the unphosphorylated form of the C-terminal domain (CTD) of RNA polymerase II. The Mediator complex dissociates from the RNA polymerase II holoenzyme and stays at the promoter when transcriptional elongation begins. The sequence is that of Mediator of RNA polymerase II transcription subunit 4 (MED4) from Saccharomyces cerevisiae (strain ATCC 204508 / S288c) (Baker's yeast).